The following is a 142-amino-acid chain: Small heat shock protein IbpB (142 aa).

The sHSP domain occupies 26-137 (AGESQSFPPY…APQRIAISER (112 aa)).

Belongs to the small heat shock protein (HSP20) family. In terms of assembly, homodimer. Forms homomultimers of about 100-150 subunits at optimal growth temperatures. Conformation changes to oligomers at high temperatures or high ionic concentrations. The decrease in size of the multimers is accompanied by an increase in chaperone activity.

It localises to the cytoplasm. Functionally, associates with aggregated proteins, together with IbpA, to stabilize and protect them from irreversible denaturation and extensive proteolysis during heat shock and oxidative stress. Aggregated proteins bound to the IbpAB complex are more efficiently refolded and reactivated by the ATP-dependent chaperone systems ClpB and DnaK/DnaJ/GrpE. Its activity is ATP-independent. The sequence is that of Small heat shock protein IbpB from Klebsiella pneumoniae (strain 342).